A 564-amino-acid polypeptide reads, in one-letter code: Dihydroxy-acid dehydratase (564 aa).

Basic residues predominate over residues 1 to 10 (MTDTRTKRRM). A disordered region spans residues 1–23 (MTDTRTKRRMNWNSHHITQGDER). [2Fe-2S] cluster is bound at residue Cys57. Residue Asp89 participates in Mg(2+) binding. Residue Cys130 coordinates [2Fe-2S] cluster. Mg(2+) contacts are provided by Asp131 and Lys132. The residue at position 132 (Lys132) is an N6-carboxylysine. Cys202 contacts [2Fe-2S] cluster. Glu454 is a binding site for Mg(2+). The active-site Proton acceptor is the Ser480.

Belongs to the IlvD/Edd family. Homodimer. [2Fe-2S] cluster is required as a cofactor. Requires Mg(2+) as cofactor.

It carries out the reaction (2R)-2,3-dihydroxy-3-methylbutanoate = 3-methyl-2-oxobutanoate + H2O. The enzyme catalyses (2R,3R)-2,3-dihydroxy-3-methylpentanoate = (S)-3-methyl-2-oxopentanoate + H2O. The protein operates within amino-acid biosynthesis; L-isoleucine biosynthesis; L-isoleucine from 2-oxobutanoate: step 3/4. It functions in the pathway amino-acid biosynthesis; L-valine biosynthesis; L-valine from pyruvate: step 3/4. Functions in the biosynthesis of branched-chain amino acids. Catalyzes the dehydration of (2R,3R)-2,3-dihydroxy-3-methylpentanoate (2,3-dihydroxy-3-methylvalerate) into 2-oxo-3-methylpentanoate (2-oxo-3-methylvalerate) and of (2R)-2,3-dihydroxy-3-methylbutanoate (2,3-dihydroxyisovalerate) into 2-oxo-3-methylbutanoate (2-oxoisovalerate), the penultimate precursor to L-isoleucine and L-valine, respectively. In Deinococcus geothermalis (strain DSM 11300 / CIP 105573 / AG-3a), this protein is Dihydroxy-acid dehydratase.